A 616-amino-acid chain; its full sequence is Protein cereblon (616 aa).

Disordered stretches follow at residues 1–39 (MDEE…DDSV), 63–137 (FGPS…AMPR), and 182–220 (SQER…DIDM). The segment covering 11–32 (AQEQEVAGSAGEAAAGPSGAEV) has biased composition (low complexity). The segment covering 96–107 (SEEDIVLDDGTE) has biased composition (acidic residues). The span at 183 to 192 (QERRRSRNSD) shows a compositional bias: basic and acidic residues. Residues 194–203 (VSPEAEDDEL) show a composition bias toward acidic residues. Pro residues predominate over residues 206–215 (HPPPPPPRPP). A Lon N-terminal domain is found at 257–482 (HMLIFLHQYI…LIGGILKEET (226 aa)). The CULT domain occupies 481–590 (ETLFYCRYCN…LAGSSVRIGK (110 aa)). Zn(2+)-binding residues include C486, C489, C555, and C558.

The protein belongs to the CRBN family. As to quaternary structure, likely a component of a DCX (DDB1-CUL4-X-box) protein ligase complex. May interact with pic/DDB1. In terms of processing, ubiquitinated.

The protein localises to the nucleus. It participates in protein modification; protein ubiquitination. Substrate recognition component of a DCX (DDB1-CUL4-X-box) E3 protein ligase complex that mediates the ubiquitination and subsequent proteasomal degradation of target proteins. Has an essential role in mediating growth by negatively regulating insulin signaling. It also has a role in maintaining presynaptic function in the neuromuscular junction synapses of third-instar larvae. In Drosophila pseudoobscura pseudoobscura (Fruit fly), this protein is Protein cereblon.